The primary structure comprises 100 residues: UPF0473 protein Lm4b_01511 (100 aa).

The protein belongs to the UPF0473 family.

This Listeria monocytogenes serotype 4b (strain CLIP80459) protein is UPF0473 protein Lm4b_01511.